We begin with the raw amino-acid sequence, 175 residues long: Large ribosomal subunit protein uL10 (175 aa).

Belongs to the universal ribosomal protein uL10 family. Part of the ribosomal stalk of the 50S ribosomal subunit. The N-terminus interacts with L11 and the large rRNA to form the base of the stalk. The C-terminus forms an elongated spine to which L12 dimers bind in a sequential fashion forming a multimeric L10(L12)X complex.

Functionally, forms part of the ribosomal stalk, playing a central role in the interaction of the ribosome with GTP-bound translation factors. The sequence is that of Large ribosomal subunit protein uL10 from Xylella fastidiosa (strain M23).